A 297-amino-acid chain; its full sequence is Phosphoribosylaminoimidazole-succinocarboxamide synthase (297 aa).

It belongs to the SAICAR synthetase family.

The catalysed reaction is 5-amino-1-(5-phospho-D-ribosyl)imidazole-4-carboxylate + L-aspartate + ATP = (2S)-2-[5-amino-1-(5-phospho-beta-D-ribosyl)imidazole-4-carboxamido]succinate + ADP + phosphate + 2 H(+). Its pathway is purine metabolism; IMP biosynthesis via de novo pathway; 5-amino-1-(5-phospho-D-ribosyl)imidazole-4-carboxamide from 5-amino-1-(5-phospho-D-ribosyl)imidazole-4-carboxylate: step 1/2. This chain is Phosphoribosylaminoimidazole-succinocarboxamide synthase, found in Corynebacterium diphtheriae (strain ATCC 700971 / NCTC 13129 / Biotype gravis).